A 147-amino-acid chain; its full sequence is Lysozyme C (147 aa).

The signal sequence occupies residues 1-18 (MKFFLILGFCLLPLIAQG). Residues 19–147 (KVFQRCELAA…VSQWIRGCRV (129 aa)) form the C-type lysozyme domain. 4 disulfides stabilise this stretch: cysteine 24–cysteine 145, cysteine 48–cysteine 133, cysteine 82–cysteine 98, and cysteine 94–cysteine 112. Catalysis depends on residues glutamate 53 and aspartate 70. Position 119 (aspartate 119) interacts with substrate.

The protein belongs to the glycosyl hydrolase 22 family. As to quaternary structure, monomer. As to expression, expressed in liver and ovary. Not expressed in bone marrow, lung, spleen, intestine or oviduct.

Its subcellular location is the secreted. It catalyses the reaction Hydrolysis of (1-&gt;4)-beta-linkages between N-acetylmuramic acid and N-acetyl-D-glucosamine residues in a peptidoglycan and between N-acetyl-D-glucosamine residues in chitodextrins.. Functionally, lysozymes have primarily a bacteriolytic function; those in tissues and body fluids are associated with the monocyte-macrophage system and enhance the activity of immunoagents. Has bacteriolytic activity against M.luteus. This chain is Lysozyme C, found in Dromaius novaehollandiae (Emu).